Reading from the N-terminus, the 202-residue chain is Na(+)-translocating NADH-quinone reductase subunit E (202 aa).

6 consecutive transmembrane segments (helical) span residues 5 to 25 (VSLF…FLGM), 35 to 55 (VSTA…TVPL), 81 to 101 (FLGL…LEMF), 114 to 134 (GVFL…LFMV), 144 to 164 (VVYG…LAGI), and 180 to 200 (LGIT…FGGM).

This sequence belongs to the NqrDE/RnfAE family. As to quaternary structure, composed of six subunits; NqrA, NqrB, NqrC, NqrD, NqrE and NqrF.

Its subcellular location is the cell inner membrane. The enzyme catalyses a ubiquinone + n Na(+)(in) + NADH + H(+) = a ubiquinol + n Na(+)(out) + NAD(+). Functionally, NQR complex catalyzes the reduction of ubiquinone-1 to ubiquinol by two successive reactions, coupled with the transport of Na(+) ions from the cytoplasm to the periplasm. NqrA to NqrE are probably involved in the second step, the conversion of ubisemiquinone to ubiquinol. This chain is Na(+)-translocating NADH-quinone reductase subunit E, found in Psychrobacter arcticus (strain DSM 17307 / VKM B-2377 / 273-4).